The chain runs to 401 residues: Chalcone synthase 3 (401 aa).

Cys168 is a catalytic residue.

It belongs to the thiolase-like superfamily. Chalcone/stilbene synthases family.

It carries out the reaction (E)-4-coumaroyl-CoA + 3 malonyl-CoA + 3 H(+) = 2',4,4',6'-tetrahydroxychalcone + 3 CO2 + 4 CoA. It participates in secondary metabolite biosynthesis; flavonoid biosynthesis. Its function is as follows. The primary product of this enzyme is 4,2',4',6'-tetrahydroxychalcone (also termed naringenin-chalcone or chalcone) which can under specific conditions spontaneously isomerize into naringenin. In Sorghum bicolor (Sorghum), this protein is Chalcone synthase 3 (CHS3).